A 63-amino-acid polypeptide reads, in one-letter code: Venom peptide 2a (63 aa).

An N-terminal signal peptide occupies residues 1–22; sequence MRGTSFILFAVVVILGFLNANA. 5 AXPX repeats span residues 22–25, 26–29, 32–35, 38–41, and 44–47; these read AEPL, ANPA, ANPD, and ANPE. Residues 23–48 constitute a propeptide that is removed on maturation; sequence EPLANPAPLANPDPLANPDPLANPEA. Position 62 is a leucine amide (Leu62).

Expressed by the venom gland.

It is found in the secreted. The protein localises to the target cell membrane. In terms of biological role, antimicrobial peptide. Shows activities against Gram-positive bacteria (S.aureus MIC=50 uM and 200 ug/ml, and B.subtilis MIC=200 ug/ml), Gram-negative bacterium E.coli (MIC=100 uM and 200 ug/ml) and fungi (B.cinerea MIC=5 uM, S.cerevisiae MIC=128 ug/ml, S.pombe MIC=128 ug/ml, A.nidulans MIC=128 ug/ml, and C.albicans MIC=64-100 uM). Shows cytolytic activity against insect cell lines. Its hemolytic activity is controversial, as Baek and colleagues report no activity while Bea and colleagues note a hemolytic activity. In vivo, peptide injection in the vicinity of the head and thorax of lepidopteran larvae induces feeding disorder followed by death due to starvation. Is weakly lethal when tested on water flies (D.magna), but is not lethal on lady beetles (H.convergens). This Eumenes pomiformis (Potter wasp) protein is Venom peptide 2a.